The chain runs to 671 residues: DNA ligase (671 aa).

Residues D32–D36, S81–L82, and E113 contribute to the NAD(+) site. K115 (N6-AMP-lysine intermediate) is an active-site residue. NAD(+) is bound by residues R136, E173, K290, and K314. Zn(2+)-binding residues include C408, C411, C426, and C432. The 79-residue stretch at E593–S671 folds into the BRCT domain.

This sequence belongs to the NAD-dependent DNA ligase family. LigA subfamily. The cofactor is Mg(2+). Mn(2+) is required as a cofactor.

It carries out the reaction NAD(+) + (deoxyribonucleotide)n-3'-hydroxyl + 5'-phospho-(deoxyribonucleotide)m = (deoxyribonucleotide)n+m + AMP + beta-nicotinamide D-nucleotide.. Its function is as follows. DNA ligase that catalyzes the formation of phosphodiester linkages between 5'-phosphoryl and 3'-hydroxyl groups in double-stranded DNA using NAD as a coenzyme and as the energy source for the reaction. It is essential for DNA replication and repair of damaged DNA. This is DNA ligase from Escherichia coli O9:H4 (strain HS).